The primary structure comprises 186 residues: Ribosome-recycling factor (186 aa).

This sequence belongs to the RRF family.

Its subcellular location is the cytoplasm. Functionally, responsible for the release of ribosomes from messenger RNA at the termination of protein biosynthesis. May increase the efficiency of translation by recycling ribosomes from one round of translation to another. In Chlorobium phaeobacteroides (strain DSM 266 / SMG 266 / 2430), this protein is Ribosome-recycling factor.